The following is a 148-amino-acid chain: D-aminoacyl-tRNA deacylase (148 aa).

The Gly-cisPro motif, important for rejection of L-amino acids motif lies at 136 to 137 (GP).

Belongs to the DTD family. As to quaternary structure, homodimer.

The protein resides in the cytoplasm. It catalyses the reaction glycyl-tRNA(Ala) + H2O = tRNA(Ala) + glycine + H(+). The enzyme catalyses a D-aminoacyl-tRNA + H2O = a tRNA + a D-alpha-amino acid + H(+). Its function is as follows. An aminoacyl-tRNA editing enzyme that deacylates mischarged D-aminoacyl-tRNAs. Also deacylates mischarged glycyl-tRNA(Ala), protecting cells against glycine mischarging by AlaRS. Acts via tRNA-based rather than protein-based catalysis; rejects L-amino acids rather than detecting D-amino acids in the active site. By recycling D-aminoacyl-tRNA to D-amino acids and free tRNA molecules, this enzyme counteracts the toxicity associated with the formation of D-aminoacyl-tRNA entities in vivo and helps enforce protein L-homochirality. The protein is D-aminoacyl-tRNA deacylase of Kosmotoga olearia (strain ATCC BAA-1733 / DSM 21960 / TBF 19.5.1).